Here is a 214-residue protein sequence, read N- to C-terminus: Sugar transporter SWEET1 (214 aa).

A run of 7 helical transmembrane segments spans residues 3 to 23 (WMWL…SSGL), 38 to 58 (IQFL…YYGY), 65 to 85 (LIIV…AYIL), 93 to 113 (VVSQ…YFTL), 125 to 145 (LGLF…ADLA), 157 to 177 (SFPL…YGWV), and 181 to 201 (LYIT…FWLF). One can recognise a MtN3/slv 1 domain in the interval 6-89 (LLSGACIVFT…MAAYILYSLE (84 aa)). Positions 124–207 (QLGLFCSIFT…FWLFSRYPPD (84 aa)) constitute a MtN3/slv 2 domain.

It belongs to the SWEET sugar transporter family.

It is found in the golgi apparatus membrane. The protein resides in the cell membrane. In terms of biological role, mediates sugar transport across membranes. The sequence is that of Sugar transporter SWEET1 (slc50a1) from Xenopus tropicalis (Western clawed frog).